The chain runs to 413 residues: Patatin-like protein 3 (413 aa).

The PNPLA domain occupies 54-245 (LSVDGGARPE…ALGNPTAAAI (192 aa)). Residues 58–61 (GGAR) carry the GGXR motif. The active-site Nucleophile is the serine 100. A disordered region spans residues 384–413 (EHGRRKQHVPPAASGGGGGGLDCHVSKKQP).

The protein belongs to the patatin family.

Functionally, possesses non-specific lipolytic acyl hydrolase (LAH) activity. Hydrolyzes phospholipids as well as galactolipids. May play a role in disease resistance. The polypeptide is Patatin-like protein 3 (PLP3) (Oryza sativa subsp. indica (Rice)).